Consider the following 137-residue polypeptide: Nucleoside diphosphate kinase (137 aa).

Residues K11, F59, R87, T93, R104, and N114 each coordinate ATP. H117 (pros-phosphohistidine intermediate) is an active-site residue.

It belongs to the NDK family. As to quaternary structure, homotetramer. Requires Mg(2+) as cofactor.

Its subcellular location is the cytoplasm. The catalysed reaction is a 2'-deoxyribonucleoside 5'-diphosphate + ATP = a 2'-deoxyribonucleoside 5'-triphosphate + ADP. It catalyses the reaction a ribonucleoside 5'-diphosphate + ATP = a ribonucleoside 5'-triphosphate + ADP. Functionally, major role in the synthesis of nucleoside triphosphates other than ATP. The ATP gamma phosphate is transferred to the NDP beta phosphate via a ping-pong mechanism, using a phosphorylated active-site intermediate. This Parafrankia sp. (strain EAN1pec) protein is Nucleoside diphosphate kinase.